Here is a 154-residue protein sequence, read N- to C-terminus: Ribonuclease HI (154 aa).

In terms of domain architecture, RNase H type-1 spans 1-142; that stretch reads MQKQIEIFTD…CDQLAKAGAE (142 aa). 4 residues coordinate Mg(2+): aspartate 10, glutamate 48, aspartate 70, and aspartate 134.

This sequence belongs to the RNase H family. As to quaternary structure, monomer. Requires Mg(2+) as cofactor.

It localises to the cytoplasm. The catalysed reaction is Endonucleolytic cleavage to 5'-phosphomonoester.. Functionally, endonuclease that specifically degrades the RNA of RNA-DNA hybrids. The polypeptide is Ribonuclease HI (rnhA) (Pasteurella multocida (strain Pm70)).